A 366-amino-acid chain; its full sequence is Ribosomal RNA large subunit methyltransferase M (366 aa).

S-adenosyl-L-methionine is bound by residues serine 188, 221–224, aspartate 240, aspartate 260, and aspartate 277; that span reads CPGG. Lysine 306 serves as the catalytic Proton acceptor.

Belongs to the class I-like SAM-binding methyltransferase superfamily. RNA methyltransferase RlmE family. RlmM subfamily. Monomer.

It is found in the cytoplasm. It carries out the reaction cytidine(2498) in 23S rRNA + S-adenosyl-L-methionine = 2'-O-methylcytidine(2498) in 23S rRNA + S-adenosyl-L-homocysteine + H(+). Functionally, catalyzes the 2'-O-methylation at nucleotide C2498 in 23S rRNA. This chain is Ribosomal RNA large subunit methyltransferase M, found in Musicola paradisiaca (strain Ech703) (Dickeya paradisiaca).